The following is a 151-amino-acid chain: MQQPRVESDIIGAGEGPQRAVPWSAWIIRQDWVRWWVCHIPRSWTQWWNTSGWRQPLQRMLWGLEGTLYLLLALMLCHALFTTGSYLLSSLWPVVAVMWSHLLPAILLLVLSALPALLFAASFLLLFSTLLSLVGLLTSMTQPGYAQDLDQ.

A run of 3 helical transmembrane segments spans residues 61–81, 85–105, and 116–138; these read LWGLEGTLYLLLALMLCHALF, SYLLSSLWPVVAVMWSHLLPA, and ALLFAASFLLLFSTLLSLVGLLT.

Its subcellular location is the membrane. The sequence is that of Transmembrane protein 239 (Tmem239) from Mus musculus (Mouse).